A 61-amino-acid polypeptide reads, in one-letter code: Small ribosomal subunit protein uS14 (61 aa).

Residues cysteine 24, cysteine 27, cysteine 40, and cysteine 43 each contribute to the Zn(2+) site.

It belongs to the universal ribosomal protein uS14 family. Zinc-binding uS14 subfamily. As to quaternary structure, part of the 30S ribosomal subunit. Contacts proteins S3 and S10. Requires Zn(2+) as cofactor.

In terms of biological role, binds 16S rRNA, required for the assembly of 30S particles and may also be responsible for determining the conformation of the 16S rRNA at the A site. This chain is Small ribosomal subunit protein uS14, found in Roseiflexus sp. (strain RS-1).